The chain runs to 298 residues: Protein REVEILLE 8 (298 aa).

The tract at residues 1 to 44 is disordered; it reads MSSSPSRNPTNAEAPPPPPTSTDAVAEGSSKKVRKPYTITKSRE. One can recognise an HTH myb-type domain in the interval 38-92; that stretch reads TITKSRESWTEEEHDKFLEALQLFDRDWKKIEDFVGSKTVIQIRSHAQKYFLKVQ. Positions 65 to 88 form a DNA-binding region, H-T-H motif; it reads WKKIEDFVGSKTVIQIRSHAQKYF. The interval 96 to 123 is disordered; it reads TLAHVPPPRPKRKAAHPYPQKASKNAQM.

It is found in the nucleus. Its function is as follows. Transcriptional activator of evening element (EE)-containing clock-controlled genes. Forms a negative feedback loop with APRR5. Regulates the pattern of histone H3 acetylation of the TOC1 promoter. RVE4, RVE6 and RVE8 are components of the circadian system acting synergistically to regulate flowering time, redundantly to regulate leaf growth, and antagonistically to regulate hypocotyl elongation; their action seems independent of ZTL and HY5. In Arabidopsis thaliana (Mouse-ear cress), this protein is Protein REVEILLE 8.